The following is a 551-amino-acid chain: Fusion glycoprotein F0 (551 aa).

The signal sequence occupies residues Met-1 to Ala-23. The Extracellular portion of the chain corresponds to Ile-24–Ala-492. 4 N-linked (GlcNAc...) asparagine; by host glycosylation sites follow: Asn-65, Asn-69, Asn-77, and Asn-90. Disulfide bonds link Cys-68–Cys-189, Cys-328–Cys-337, Cys-352–Cys-360, Cys-384–Cys-389, and Cys-391–Cys-414. The segment at Phe-107–Ile-131 is fusion peptide. Residues Val-132–Asp-160 adopt a coiled-coil conformation. 2 N-linked (GlcNAc...) asparagine; by host glycosylation sites follow: Asn-431 and Asn-461. Positions Gln-456 to Ala-481 form a coiled coil. A helical transmembrane segment spans residues Ile-493–Ile-513. Topologically, residues Lys-514–Ser-551 are cytoplasmic.

The protein belongs to the paramyxoviruses fusion glycoprotein family. As to quaternary structure, homotrimer of disulfide-linked F1-F2. In terms of processing, the inactive precursor F0 is glycosylated and proteolytically cleaved into F1 and F2 to be functionally active. The cleavage is mediated by cellular proteases during the transport and maturation of the polypeptide.

The protein resides in the virion membrane. It localises to the host cell membrane. Class I viral fusion protein. Under the current model, the protein has at least 3 conformational states: pre-fusion native state, pre-hairpin intermediate state, and post-fusion hairpin state. During viral and plasma cell membrane fusion, the heptad repeat (HR) regions assume a trimer-of-hairpins structure, positioning the fusion peptide in close proximity to the C-terminal region of the ectodomain. The formation of this structure appears to drive apposition and subsequent fusion of viral and plasma cell membranes. Directs fusion of viral and cellular membranes leading to delivery of the nucleocapsid into the cytoplasm. This fusion is pH independent and occurs directly at the outer cell membrane. The trimer of F1-F2 (F protein) probably interacts with HN at the virion surface. Upon HN binding to its cellular receptor, the hydrophobic fusion peptide is unmasked and interacts with the cellular membrane, inducing the fusion between cell and virion membranes. Later in infection, F proteins expressed at the plasma membrane of infected cells could mediate fusion with adjacent cells to form syncytia, a cytopathic effect that could lead to tissue necrosis. The chain is Fusion glycoprotein F0 (F) from Human parainfluenza 2 virus (HPIV-2).